The sequence spans 418 residues: Serine hydroxymethyltransferase (418 aa).

Residues Leu121 and Gly125–Leu127 contribute to the (6S)-5,6,7,8-tetrahydrofolate site. An N6-(pyridoxal phosphate)lysine modification is found at Lys230. Position 355–357 (Ser355–Phe357) interacts with (6S)-5,6,7,8-tetrahydrofolate.

The protein belongs to the SHMT family. Homodimer. It depends on pyridoxal 5'-phosphate as a cofactor.

It localises to the cytoplasm. The catalysed reaction is (6R)-5,10-methylene-5,6,7,8-tetrahydrofolate + glycine + H2O = (6S)-5,6,7,8-tetrahydrofolate + L-serine. It functions in the pathway one-carbon metabolism; tetrahydrofolate interconversion. The protein operates within amino-acid biosynthesis; glycine biosynthesis; glycine from L-serine: step 1/1. In terms of biological role, catalyzes the reversible interconversion of serine and glycine with tetrahydrofolate (THF) serving as the one-carbon carrier. This reaction serves as the major source of one-carbon groups required for the biosynthesis of purines, thymidylate, methionine, and other important biomolecules. Also exhibits THF-independent aldolase activity toward beta-hydroxyamino acids, producing glycine and aldehydes, via a retro-aldol mechanism. This Streptococcus pyogenes serotype M18 (strain MGAS8232) protein is Serine hydroxymethyltransferase.